We begin with the raw amino-acid sequence, 60 residues long: UPF0434 protein YcaR (60 aa).

It belongs to the UPF0434 family.

The protein is UPF0434 protein YcaR of Escherichia coli O81 (strain ED1a).